Here is a 339-residue protein sequence, read N- to C-terminus: Phenylalanine--tRNA ligase alpha subunit (339 aa).

Glutamate 250 contacts Mg(2+).

This sequence belongs to the class-II aminoacyl-tRNA synthetase family. Phe-tRNA synthetase alpha subunit type 1 subfamily. As to quaternary structure, tetramer of two alpha and two beta subunits. It depends on Mg(2+) as a cofactor.

It localises to the cytoplasm. The enzyme catalyses tRNA(Phe) + L-phenylalanine + ATP = L-phenylalanyl-tRNA(Phe) + AMP + diphosphate + H(+). The protein is Phenylalanine--tRNA ligase alpha subunit of Parabacteroides distasonis (strain ATCC 8503 / DSM 20701 / CIP 104284 / JCM 5825 / NCTC 11152).